The following is a 215-amino-acid chain: Ribose-5-phosphate isomerase A (215 aa).

Substrate-binding positions include 26 to 29 (TGST), 79 to 82 (DGAD), and 92 to 95 (KGGG). Residue Glu101 is the Proton acceptor of the active site. Residue Lys119 coordinates substrate.

Belongs to the ribose 5-phosphate isomerase family. In terms of assembly, homodimer.

It catalyses the reaction aldehydo-D-ribose 5-phosphate = D-ribulose 5-phosphate. It participates in carbohydrate degradation; pentose phosphate pathway; D-ribose 5-phosphate from D-ribulose 5-phosphate (non-oxidative stage): step 1/1. In terms of biological role, catalyzes the reversible conversion of ribose-5-phosphate to ribulose 5-phosphate. This chain is Ribose-5-phosphate isomerase A, found in Xylella fastidiosa (strain M12).